Reading from the N-terminus, the 89-residue chain is Arminin 7591 (89 aa).

The N-terminal stretch at 1 to 18 is a signal peptide; sequence MRSAFAVLFLALIAITYS. Positions 19–58 are excised as a propeptide; the sequence is KNYEDVKEEIKNEVENEILKDLEEDVNEFDDNVQEEVNDA. At leucine 86 the chain carries Leucine amide.

It belongs to the arminin family. As to expression, expressed in entodermal epithelium along the body column.

The protein localises to the secreted. The protein resides in the target cell membrane. Functionally, antimicrobial peptide with a broad-spectrum antimicrobial activity. Keeps its antibacterial activity under a wide range of salt concentrations that mimic physiological conditions of human blood, which is surprising, since Hydra is an obligate freshwater animal with nearly no salt tolerance. Does not affect red blood cells. The sequence is that of Arminin 7591 from Hydra vulgaris (Hydra).